An 899-amino-acid chain; its full sequence is UPF0182 protein Mhun_1303 (899 aa).

The next 7 membrane-spanning stretches (helical) occupy residues 6–26, 39–59, 93–113, 136–156, 196–216, 240–260, and 271–291; these read LLIF…DLLS, VFLT…LLFF, VAAG…LAFL, LPFY…TLII, FLPQ…AFLW, ITIP…LLFL, and IAYG…AGFL.

It belongs to the UPF0182 family.

It localises to the cell membrane. This Methanospirillum hungatei JF-1 (strain ATCC 27890 / DSM 864 / NBRC 100397 / JF-1) protein is UPF0182 protein Mhun_1303.